A 305-amino-acid chain; its full sequence is UDP-3-O-acyl-N-acetylglucosamine deacetylase (305 aa).

The Zn(2+) site is built by His-78, His-237, and Asp-241. The active-site Proton donor is the His-264.

The protein belongs to the LpxC family. Zn(2+) is required as a cofactor.

It carries out the reaction a UDP-3-O-[(3R)-3-hydroxyacyl]-N-acetyl-alpha-D-glucosamine + H2O = a UDP-3-O-[(3R)-3-hydroxyacyl]-alpha-D-glucosamine + acetate. The protein operates within glycolipid biosynthesis; lipid IV(A) biosynthesis; lipid IV(A) from (3R)-3-hydroxytetradecanoyl-[acyl-carrier-protein] and UDP-N-acetyl-alpha-D-glucosamine: step 2/6. Its function is as follows. Catalyzes the hydrolysis of UDP-3-O-myristoyl-N-acetylglucosamine to form UDP-3-O-myristoylglucosamine and acetate, the committed step in lipid A biosynthesis. In Burkholderia multivorans (strain ATCC 17616 / 249), this protein is UDP-3-O-acyl-N-acetylglucosamine deacetylase.